The sequence spans 74 residues: Exodeoxyribonuclease 7 small subunit (74 aa).

The protein belongs to the XseB family. In terms of assembly, heterooligomer composed of large and small subunits.

It localises to the cytoplasm. The catalysed reaction is Exonucleolytic cleavage in either 5'- to 3'- or 3'- to 5'-direction to yield nucleoside 5'-phosphates.. Functionally, bidirectionally degrades single-stranded DNA into large acid-insoluble oligonucleotides, which are then degraded further into small acid-soluble oligonucleotides. This Leuconostoc citreum (strain KM20) protein is Exodeoxyribonuclease 7 small subunit.